Reading from the N-terminus, the 185-residue chain is CASP-like protein 2C3 (185 aa).

The Cytoplasmic segment spans residues 1–13 (MAAAARVSEVKAE). A helical transmembrane segment spans residues 14–34 (GLLRGACAALAAAAALLVGLS). Over 35–53 (TQTETVLLVRKKATVKDVQ) the chain is Extracellular. The chain crosses the membrane as a helical span at residues 54-74 (ALWVLAMAAAAAAGYHLLQLL). Topologically, residues 75-104 (KCLYLGRVGGARPCRRSSRALAWTCLLLDK) are cytoplasmic. Residues 105–125 (ACAYTTFATTVAAAQACVVAL) traverse the membrane as a helical segment. The Extracellular segment spans residues 126–146 (DGAHAVQWTKLCNIYTRFCEQ). Residues 147-167 (VAGSLVLGMLAAVGTAVLSAA) form a helical membrane-spanning segment. Over 168–185 (SARNVFRHYSSLETYAAH) the chain is Cytoplasmic.

This sequence belongs to the Casparian strip membrane proteins (CASP) family. In terms of assembly, homodimer and heterodimers.

Its subcellular location is the cell membrane. This Zea mays (Maize) protein is CASP-like protein 2C3.